Reading from the N-terminus, the 165-residue chain is Putative glycine-rich cell wall structural protein 1 (165 aa).

A signal peptide spans 1–23 (MARKVIALAFLLLLTISLSKSNA). 2 R2; Tyr-rich repeats span residues 56–62 (GYGYGYG) and 93–99 (GYGYGYG). The tract at residues 105-125 (AQGQGSGGGGGGGGGGGGGGS) is disordered. The stretch at 132-138 (GYGYGYG) is one R2; Tyr-rich repeat. The segment at 146–165 (GGGGGGGGGGGGSGYVGKHE) is disordered.

It is found in the secreted. The protein localises to the cell wall. Its function is as follows. Responsible for plasticity of the cell wall. This is Putative glycine-rich cell wall structural protein 1 (GRP-1) from Oryza sativa subsp. indica (Rice).